Reading from the N-terminus, the 588-residue chain is Sulfite reductase [NADPH] hemoprotein beta-component (588 aa).

Residues cysteine 442, cysteine 448, cysteine 487, and cysteine 491 each contribute to the [4Fe-4S] cluster site. Cysteine 491 is a siroheme binding site.

It belongs to the nitrite and sulfite reductase 4Fe-4S domain family. Alpha(8)-beta(8). The alpha component is a flavoprotein, the beta component is a hemoprotein. It depends on siroheme as a cofactor. The cofactor is [4Fe-4S] cluster.

It carries out the reaction hydrogen sulfide + 3 NADP(+) + 3 H2O = sulfite + 3 NADPH + 4 H(+). It functions in the pathway sulfur metabolism; hydrogen sulfide biosynthesis; hydrogen sulfide from sulfite (NADPH route): step 1/1. Component of the sulfite reductase complex that catalyzes the 6-electron reduction of sulfite to sulfide. This is one of several activities required for the biosynthesis of L-cysteine from sulfate. In Actinobacillus pleuropneumoniae serotype 5b (strain L20), this protein is Sulfite reductase [NADPH] hemoprotein beta-component.